Consider the following 156-residue polypeptide: Transcription inhibitor protein Gfh1 (156 aa).

Residues 1 to 74 (MAREVKLTKA…LEDILSRAVI (74 aa)) adopt a coiled-coil conformation. Zn(2+) is bound by residues Glu-20 and Glu-24.

It belongs to the GreA/GreB family. In terms of assembly, interacts with RNAP.

Its function is as follows. Inhibits all catalytic activities of RNA polymerase (RNAP) by partially occluding its substrate-binding site and preventing NTP binding. The chain is Transcription inhibitor protein Gfh1 (gfh1) from Thermus thermophilus (strain ATCC 27634 / DSM 579 / HB8).